The sequence spans 644 residues: Threonine--tRNA ligase (644 aa).

Positions 1 to 62 constitute a TGS domain; sequence MSFSITLPDG…DSDSEVAIIT (62 aa). Residues 240 to 538 are catalytic; sequence DHRTIGRDLD…LTEIYKGAFP (299 aa). Zn(2+) contacts are provided by cysteine 334, histidine 385, and histidine 515.

It belongs to the class-II aminoacyl-tRNA synthetase family. As to quaternary structure, homodimer. The cofactor is Zn(2+).

The protein localises to the cytoplasm. It catalyses the reaction tRNA(Thr) + L-threonine + ATP = L-threonyl-tRNA(Thr) + AMP + diphosphate + H(+). Catalyzes the attachment of threonine to tRNA(Thr) in a two-step reaction: L-threonine is first activated by ATP to form Thr-AMP and then transferred to the acceptor end of tRNA(Thr). Also edits incorrectly charged L-seryl-tRNA(Thr). In Lactobacillus helveticus (strain DPC 4571), this protein is Threonine--tRNA ligase.